The chain runs to 233 residues: Adenosine 5'-phosphosulfate reductase (233 aa).

Positions 120, 121, 203, and 206 each coordinate [4Fe-4S] cluster. Cys229 functions as the Nucleophile; cysteine thiosulfonate intermediate in the catalytic mechanism.

It belongs to the PAPS reductase family. CysH subfamily. Requires [4Fe-4S] cluster as cofactor.

It localises to the cytoplasm. It catalyses the reaction [thioredoxin]-disulfide + sulfite + AMP + 2 H(+) = adenosine 5'-phosphosulfate + [thioredoxin]-dithiol. Its pathway is sulfur metabolism; hydrogen sulfide biosynthesis; sulfite from sulfate. Catalyzes the formation of sulfite from adenosine 5'-phosphosulfate (APS) using thioredoxin as an electron donor. This is Adenosine 5'-phosphosulfate reductase from Bacillus velezensis (strain DSM 23117 / BGSC 10A6 / LMG 26770 / FZB42) (Bacillus amyloliquefaciens subsp. plantarum).